Reading from the N-terminus, the 805-residue chain is Leucine--tRNA ligase (805 aa).

The 'HIGH' region signature appears at Pro-39 to His-50. Residues Lys-583 to Ser-587 carry the 'KMSKS' region motif. Position 586 (Lys-586) interacts with ATP.

It belongs to the class-I aminoacyl-tRNA synthetase family.

It is found in the cytoplasm. It carries out the reaction tRNA(Leu) + L-leucine + ATP = L-leucyl-tRNA(Leu) + AMP + diphosphate. This Mycoplasmoides gallisepticum (strain R(low / passage 15 / clone 2)) (Mycoplasma gallisepticum) protein is Leucine--tRNA ligase.